Reading from the N-terminus, the 139-residue chain is S-protein homolog 14 (139 aa).

The N-terminal stretch at 1–20 (MNRFIIFMFVVVTYFGLNVA) is a signal peptide. Asparagine 136 is a glycosylation site (N-linked (GlcNAc...) asparagine).

Belongs to the plant self-incompatibility (S1) protein family.

It is found in the secreted. In Arabidopsis thaliana (Mouse-ear cress), this protein is S-protein homolog 14.